The sequence spans 92 residues: Small ribosomal subunit protein uS19 (92 aa).

Belongs to the universal ribosomal protein uS19 family.

Its function is as follows. Protein S19 forms a complex with S13 that binds strongly to the 16S ribosomal RNA. This chain is Small ribosomal subunit protein uS19, found in Streptococcus thermophilus (strain ATCC BAA-491 / LMD-9).